A 515-amino-acid polypeptide reads, in one-letter code: 2-isopropylmalate synthase (515 aa).

Residues 4-266 enclose the Pyruvate carboxyltransferase domain; the sequence is ISVFDTTLRD…ETGLILKEIK (263 aa). The Mn(2+) site is built by Asp13, His201, His203, and Asn237. The tract at residues 391–515 is regulatory domain; sequence ELQTLQVNYG…AEVYGSKVEV (125 aa).

Belongs to the alpha-IPM synthase/homocitrate synthase family. LeuA type 1 subfamily. In terms of assembly, homodimer. Mn(2+) is required as a cofactor.

Its subcellular location is the cytoplasm. It carries out the reaction 3-methyl-2-oxobutanoate + acetyl-CoA + H2O = (2S)-2-isopropylmalate + CoA + H(+). It functions in the pathway amino-acid biosynthesis; L-leucine biosynthesis; L-leucine from 3-methyl-2-oxobutanoate: step 1/4. Functionally, catalyzes the condensation of the acetyl group of acetyl-CoA with 3-methyl-2-oxobutanoate (2-ketoisovalerate) to form 3-carboxy-3-hydroxy-4-methylpentanoate (2-isopropylmalate). This Halalkalibacterium halodurans (strain ATCC BAA-125 / DSM 18197 / FERM 7344 / JCM 9153 / C-125) (Bacillus halodurans) protein is 2-isopropylmalate synthase.